The primary structure comprises 403 residues: Phosphoglycerate kinase (403 aa).

Substrate contacts are provided by residues 24 to 26 (DLN), R39, 62 to 65 (HLGR), R121, and R161. Residues K211, G299, E330, and 359 to 362 (GGDS) contribute to the ATP site.

Belongs to the phosphoglycerate kinase family. Monomer.

Its subcellular location is the cytoplasm. The enzyme catalyses (2R)-3-phosphoglycerate + ATP = (2R)-3-phospho-glyceroyl phosphate + ADP. The protein operates within carbohydrate degradation; glycolysis; pyruvate from D-glyceraldehyde 3-phosphate: step 2/5. This Corynebacterium kroppenstedtii (strain DSM 44385 / JCM 11950 / CIP 105744 / CCUG 35717) protein is Phosphoglycerate kinase.